A 328-amino-acid chain; its full sequence is D-cysteine desulfhydrase (328 aa).

N6-(pyridoxal phosphate)lysine is present on lysine 51.

This sequence belongs to the ACC deaminase/D-cysteine desulfhydrase family. Homodimer. The cofactor is pyridoxal 5'-phosphate.

It catalyses the reaction D-cysteine + H2O = hydrogen sulfide + pyruvate + NH4(+) + H(+). Its function is as follows. Catalyzes the alpha,beta-elimination reaction of D-cysteine and of several D-cysteine derivatives. It could be a defense mechanism against D-cysteine. The chain is D-cysteine desulfhydrase from Klebsiella pneumoniae (strain 342).